The sequence spans 133 residues: Phosphoribosyl-AMP cyclohydrolase (133 aa).

Asp77 is a binding site for Mg(2+). Position 78 (Cys78) interacts with Zn(2+). Mg(2+) contacts are provided by Asp79 and Asp81. Zn(2+) contacts are provided by Cys95 and Cys102.

This sequence belongs to the PRA-CH family. In terms of assembly, homodimer. Mg(2+) is required as a cofactor. Zn(2+) serves as cofactor.

The protein localises to the cytoplasm. It carries out the reaction 1-(5-phospho-beta-D-ribosyl)-5'-AMP + H2O = 1-(5-phospho-beta-D-ribosyl)-5-[(5-phospho-beta-D-ribosylamino)methylideneamino]imidazole-4-carboxamide. It functions in the pathway amino-acid biosynthesis; L-histidine biosynthesis; L-histidine from 5-phospho-alpha-D-ribose 1-diphosphate: step 3/9. Catalyzes the hydrolysis of the adenine ring of phosphoribosyl-AMP. The polypeptide is Phosphoribosyl-AMP cyclohydrolase (Pseudomonas fluorescens (strain Pf0-1)).